The sequence spans 231 residues: MQPRVILTDIEGTTSSISFVKNVLFPYARKALPAFVAEHGQQPEVRRWLDAVATEIGGACQDSLVAETLQGWIDQDRKHTALKALQGLIWDEGYRRGDYTAHFYPEVAPVLKGWHAAGLPLYVYSSGSVPAQKLFFGFSDAGDLSPLVSGWFDTEIGGKREADSYRRIVQAIGVPAGEIVFLSDVVEELDAAREAGLQTRLIDRLDDYPMPRIGQAANGHERVENFQQIQL.

Belongs to the HAD-like hydrolase superfamily. MasA/MtnC family. In terms of assembly, monomer. Requires Mg(2+) as cofactor.

It carries out the reaction 5-methylsulfanyl-2,3-dioxopentyl phosphate + H2O = 1,2-dihydroxy-5-(methylsulfanyl)pent-1-en-3-one + phosphate. The protein operates within amino-acid biosynthesis; L-methionine biosynthesis via salvage pathway; L-methionine from S-methyl-5-thio-alpha-D-ribose 1-phosphate: step 3/6. It participates in amino-acid biosynthesis; L-methionine biosynthesis via salvage pathway; L-methionine from S-methyl-5-thio-alpha-D-ribose 1-phosphate: step 4/6. Bifunctional enzyme that catalyzes the enolization of 2,3-diketo-5-methylthiopentyl-1-phosphate (DK-MTP-1-P) into the intermediate 2-hydroxy-3-keto-5-methylthiopentenyl-1-phosphate (HK-MTPenyl-1-P), which is then dephosphorylated to form the acireductone 1,2-dihydroxy-3-keto-5-methylthiopentene (DHK-MTPene). The sequence is that of Enolase-phosphatase E1 from Stenotrophomonas maltophilia (strain K279a).